A 418-amino-acid polypeptide reads, in one-letter code: 3-isopropylmalate dehydratase large subunit 1 (418 aa).

[4Fe-4S] cluster contacts are provided by Cys298, Cys358, and Cys361.

This sequence belongs to the aconitase/IPM isomerase family. LeuC type 2 subfamily. As to quaternary structure, heterodimer of LeuC and LeuD. [4Fe-4S] cluster is required as a cofactor.

It catalyses the reaction (2R,3S)-3-isopropylmalate = (2S)-2-isopropylmalate. Its pathway is amino-acid biosynthesis; L-leucine biosynthesis; L-leucine from 3-methyl-2-oxobutanoate: step 2/4. Catalyzes the isomerization between 2-isopropylmalate and 3-isopropylmalate, via the formation of 2-isopropylmaleate. The chain is 3-isopropylmalate dehydratase large subunit 1 from Methanopyrus kandleri (strain AV19 / DSM 6324 / JCM 9639 / NBRC 100938).